The following is a 28-amino-acid chain: Toxin a (28 aa).

An LCN-type CS-alpha/beta domain is found at 3 to 28 (VPGNYPLDSYGNCYPCTILGDNQYCI).

This sequence belongs to the long (3 C-C) scorpion toxin superfamily. Expressed by the venom gland.

It is found in the secreted. Binds to sodium channels (Nav) and affects the channel activation process. This is Toxin a from Androctonus crassicauda (Arabian fat-tailed scorpion).